The following is a 406-amino-acid chain: MSFPVEKVRADFPVLTREVNGLPLAYLDSAASAQKPNQVIDAEMEFYRHGYAAVHRGIHTLSAEATQRMENVRTQVAAFLNARSAEELVFVRGTTEGINLVANSWGNAQVHAGDNIVITQMEHHANIVPWQMLCERSGAQLRVIPLNVDGTLQLEQLDALLDARTRLVAITQISNVLGTANPVAEIIAKAHQAGAKVLVDGAQAVMHHTIDVQALDCDFYVFSGHKLYGPTGIGVLYVKEDILQAMPPWEGGGSMIATVSLTQGTTYAKAPWRFEAGTPNTGGIIGLGAAIDYVSTLGLDAIAEYEASLMRYALAEMASVPDLTLYGPDARKGVIAFNLGKHHAYDVGSFLDNYGVAVRTGHHCAMPLMAFYQVPAMCRASLVMYNTTEEVDRLVTGLKRIHHLLG.

K226 carries the N6-(pyridoxal phosphate)lysine modification. The active-site Cysteine persulfide intermediate is C364.

This sequence belongs to the class-V pyridoxal-phosphate-dependent aminotransferase family. Csd subfamily. As to quaternary structure, homodimer. Interacts with SufE and the SufBCD complex composed of SufB, SufC and SufD. The interaction with SufE is required to mediate the direct transfer of the sulfur atom from the S-sulfanylcysteine. It depends on pyridoxal 5'-phosphate as a cofactor.

It is found in the cytoplasm. It carries out the reaction (sulfur carrier)-H + L-cysteine = (sulfur carrier)-SH + L-alanine. The catalysed reaction is L-selenocysteine + AH2 = hydrogenselenide + L-alanine + A + H(+). It participates in cofactor biosynthesis; iron-sulfur cluster biosynthesis. Functionally, cysteine desulfurases mobilize the sulfur from L-cysteine to yield L-alanine, an essential step in sulfur metabolism for biosynthesis of a variety of sulfur-containing biomolecules. Component of the suf operon, which is activated and required under specific conditions such as oxidative stress and iron limitation. Acts as a potent selenocysteine lyase in vitro, that mobilizes selenium from L-selenocysteine. Selenocysteine lyase activity is however unsure in vivo. The polypeptide is Cysteine desulfurase (Enterobacter sp. (strain 638)).